The following is a 91-amino-acid chain: Small ribosomal subunit protein uS15 (91 aa).

Belongs to the universal ribosomal protein uS15 family. In terms of assembly, part of the 30S ribosomal subunit. Forms a bridge to the 50S subunit in the 70S ribosome, contacting the 23S rRNA.

In terms of biological role, one of the primary rRNA binding proteins, it binds directly to 16S rRNA where it helps nucleate assembly of the platform of the 30S subunit by binding and bridging several RNA helices of the 16S rRNA. Its function is as follows. Forms an intersubunit bridge (bridge B4) with the 23S rRNA of the 50S subunit in the ribosome. In Synechococcus sp. (strain JA-3-3Ab) (Cyanobacteria bacterium Yellowstone A-Prime), this protein is Small ribosomal subunit protein uS15.